The chain runs to 233 residues: Ribosomal RNA small subunit methyltransferase G (233 aa).

Residues Gly91, Met96, 142–143 (VE), and Arg157 each bind S-adenosyl-L-methionine.

It belongs to the methyltransferase superfamily. RNA methyltransferase RsmG family.

It localises to the cytoplasm. It carries out the reaction guanosine(527) in 16S rRNA + S-adenosyl-L-methionine = N(7)-methylguanosine(527) in 16S rRNA + S-adenosyl-L-homocysteine. Its function is as follows. Specifically methylates the N7 position of guanine in position 527 of 16S rRNA. The chain is Ribosomal RNA small subunit methyltransferase G from Cupriavidus necator (strain ATCC 17699 / DSM 428 / KCTC 22496 / NCIMB 10442 / H16 / Stanier 337) (Ralstonia eutropha).